The chain runs to 529 residues: Peptide chain release factor 3 (529 aa).

The tr-type G domain occupies 10–278; sequence ARRRTFAIIS…MFVEFAPGPQ (269 aa). GTP contacts are provided by residues 19-26, 87-91, and 141-144; these read SHPDAGKT, DTPGH, and NKMD.

This sequence belongs to the TRAFAC class translation factor GTPase superfamily. Classic translation factor GTPase family. PrfC subfamily.

Its subcellular location is the cytoplasm. Increases the formation of ribosomal termination complexes and stimulates activities of RF-1 and RF-2. It binds guanine nucleotides and has strong preference for UGA stop codons. It may interact directly with the ribosome. The stimulation of RF-1 and RF-2 is significantly reduced by GTP and GDP, but not by GMP. The chain is Peptide chain release factor 3 from Nitratidesulfovibrio vulgaris (strain DSM 19637 / Miyazaki F) (Desulfovibrio vulgaris).